A 926-amino-acid polypeptide reads, in one-letter code: Peripheral plasma membrane protein CASK (926 aa).

Residues 12–276 form the Protein kinase domain; sequence YELCEVIGKG…VYEALNHPWL (265 aa). Residues 18–26 and lysine 41 contribute to the ATP site; that span reads IGKGPFSVV. Serine 51 is modified (phosphoserine). Residue aspartate 141 is part of the active site. Phosphoserine; by autocatalysis is present on residues serine 151 and serine 155. Threonine 182 bears the Phosphothreonine mark. The tract at residues 305–315 is calmodulin-binding; it reads KGAVLAAVSSH. The residue at position 313 (serine 313) is a Phosphoserine. 2 L27 domains span residues 343 to 398 and 402 to 455; these read AERA…SPQI and PSDA…YSDE. Positions 482–909 are required for interaction with NRXN1 (via C-terminal tail); sequence MENVTRVRLV…DETIRHLEEA (428 aa). Residues 490–571 form the PDZ domain; sequence LVQFQKNTDE…SITFKIVPSY (82 aa). 2 positions are modified to phosphoserine: serine 570 and tyrosine 571. Positions 574–610 are disordered; sequence QSSSCERDSPSTSRQSPANGHSSTNNSVSDLPSTTQP. The SH3 domain maps to 612–682; sequence GRQIYVRAQF…PSPELQEWRV (71 aa). The region spanning 739–911 is the Guanylate kinase-like domain; sequence RKTLVLLGAH…TIRHLEEAVE (173 aa).

It in the N-terminal section; belongs to the protein kinase superfamily. CAMK Ser/Thr protein kinase family. CaMK subfamily. Belongs to the MAGUK family. CASK and LIN7 form a tripartite complex with CASKIN1. Component of the brain-specific heterotrimeric complex (LIN-10-LIN-2-LIN-7 complex) composed of at least APBA1, CASK, and LIN7, which associates with the motor protein KIF17 to transport vesicles along microtubules. Forms a heterotrimeric complex with DLG1 and LIN7B via their L27 domains. Identified in a complex with ACTN4, IQGAP1, MAGI2, NPHS1, SPTAN1 and SPTBN1. Part of a complex containing CASK, TBR1 and TSPYL2. Interacts with WHRN. Interacts (via the PDZ, SH3 and guanylate kinase-like domains) with NRXN1 (via C-terminus). Interacts with CASKIN1, APBA1, LIN7(A/B/C), and L27 domain of DLG1 and isoform 2 of DLG4. Interacts with FCHSD2. Interacts with KIRREL3. Interacts with TBR1. Interacts with TSPYL2. Requires Unlike other protein kinases, does not require a divalent cation such as magnesium for catalytic activity. as cofactor.

The protein resides in the nucleus. It localises to the cytoplasm. It is found in the cell membrane. The catalysed reaction is L-seryl-[protein] + ATP = O-phospho-L-seryl-[protein] + ADP + H(+). It carries out the reaction L-threonyl-[protein] + ATP = O-phospho-L-threonyl-[protein] + ADP + H(+). Its activity is regulated as follows. Differs from archetypal CaMK members in that the kinase domain exhibits a constitutively active conformation and the autoinhibitory region does not engage in direct contact with the ATP-binding cleft, although it still binds Ca(2+)/CAM. In terms of biological role, multidomain scaffolding Mg(2+)-independent protein kinase that catalyzes the phosphotransfer from ATP to proteins such as NRXN1, and plays a role in synaptic transmembrane protein anchoring and ion channel trafficking. Contributes to neural development and regulation of gene expression via interaction with the transcription factor TBR1. Binds to cell-surface proteins, including amyloid precursor protein, neurexins, and syndecans. May mediate a link between the extracellular matrix and the actin cytoskeleton via its interaction with syndecan and with the actin/spectrin-binding protein 4.1. Component of the LIN-10-LIN-2-LIN-7 complex, which associates with the motor protein KIF17 to transport vesicles containing N-methyl-D-aspartate (NMDA) receptor subunit NR2B along microtubules. In Mus musculus (Mouse), this protein is Peripheral plasma membrane protein CASK.